A 450-amino-acid polypeptide reads, in one-letter code: tRNA modification GTPase MnmE (450 aa).

Arg-23, Glu-79, and Lys-118 together coordinate (6S)-5-formyl-5,6,7,8-tetrahydrofolate. A TrmE-type G domain is found at 214 to 374 (GITLILVGKP…LKEHILNKVG (161 aa)). Asn-224 contributes to the K(+) binding site. Residues 224-229 (NAGKSS), 243-249 (TSIAGTT), and 268-271 (DTAG) contribute to the GTP site. Ser-228 is a Mg(2+) binding site. Thr-243, Ile-245, and Thr-248 together coordinate K(+). Thr-249 is a Mg(2+) binding site. A (6S)-5-formyl-5,6,7,8-tetrahydrofolate-binding site is contributed by Lys-450.

It belongs to the TRAFAC class TrmE-Era-EngA-EngB-Septin-like GTPase superfamily. TrmE GTPase family. Homodimer. Heterotetramer of two MnmE and two MnmG subunits. K(+) serves as cofactor.

The protein resides in the cytoplasm. In terms of biological role, exhibits a very high intrinsic GTPase hydrolysis rate. Involved in the addition of a carboxymethylaminomethyl (cmnm) group at the wobble position (U34) of certain tRNAs, forming tRNA-cmnm(5)s(2)U34. This chain is tRNA modification GTPase MnmE, found in Francisella tularensis subsp. holarctica (strain FTNF002-00 / FTA).